A 138-amino-acid chain; its full sequence is Basic phospholipase A2 chain HDP-1P (138 aa).

The signal sequence occupies residues 1 to 16; it reads MRILWIVAVCLIGVEG. Disulfide bonds link Cys-42–Cys-131, Cys-44–Cys-60, Cys-59–Cys-111, Cys-65–Cys-138, Cys-66–Cys-104, Cys-73–Cys-97, and Cys-91–Cys-102. Ca(2+) contacts are provided by Tyr-43, Gly-45, and Gly-47. Residue His-63 is part of the active site. Asp-64 lines the Ca(2+) pocket. Asp-105 is a catalytic residue.

As to quaternary structure, heterodimer; non-covalently linked. The toxic basic protein has phospholipase A2 activity (chain HDP-1P) and the non-toxic acidic protein functions as its inhibitor (chain HPD-1I (AC A4VBF0)). The cofactor is Ca(2+). As to expression, expressed by the venom gland.

Its subcellular location is the secreted. The enzyme catalyses a 1,2-diacyl-sn-glycero-3-phosphocholine + H2O = a 1-acyl-sn-glycero-3-phosphocholine + a fatty acid + H(+). With respect to regulation, enzymatic activity and neurotoxicity are inhibited by Triton X-100, which has been determined to be located in the center of the hydrophobic channel of the enzyme. In terms of biological role, heterodimer: shows the same activities as the monomer, but with a lower potency. Functionally, monomer: snake venom phospholipase A2 (PLA2) that shows presynaptic neurotoxicity, anticoagulant activity and that weakly inhibits ADP-induced platelet aggregation. Inhibits exocytosis in pancreatic beta cells, confirming it can act presynaptically in inhibiting the exocytosis of neurotransmitters in neurons. PLA2 catalyzes the calcium-dependent hydrolysis of the 2-acyl groups in 3-sn-phosphoglycerides. The polypeptide is Basic phospholipase A2 chain HDP-1P (Vipera nikolskii (Nikolsky's adder)).